A 162-amino-acid polypeptide reads, in one-letter code: uncharacterized protein (162 aa).

The HTH asnC-type domain maps to 6–71; the sequence is LDDLDRAILK…PIKPRKLALV (66 aa). Positions 25-44 form a DNA-binding region, H-T-H motif; it reads IAEISNQLKKPESTVHFRIK.

This is an uncharacterized protein from Pyrococcus abyssi (strain GE5 / Orsay).